A 316-amino-acid polypeptide reads, in one-letter code: Ribonuclease Z (316 aa).

7 residues coordinate Zn(2+): His-59, His-61, Asp-63, His-64, His-135, Asp-203, and His-261. The active-site Proton acceptor is the Asp-63.

The protein belongs to the RNase Z family. In terms of assembly, homodimer. It depends on Zn(2+) as a cofactor.

It catalyses the reaction Endonucleolytic cleavage of RNA, removing extra 3' nucleotides from tRNA precursor, generating 3' termini of tRNAs. A 3'-hydroxy group is left at the tRNA terminus and a 5'-phosphoryl group is left at the trailer molecule.. In terms of biological role, zinc phosphodiesterase, which displays some tRNA 3'-processing endonuclease activity. Probably involved in tRNA maturation, by removing a 3'-trailer from precursor tRNA. The protein is Ribonuclease Z of Nanoarchaeum equitans (strain Kin4-M).